We begin with the raw amino-acid sequence, 87 residues long: uncharacterized protein (87 aa).

A 2Fe-2S ferredoxin-type domain is found at 4–87; it reads SIIEITNIKK…KPKGNITIKI (84 aa). Positions 38, 43, 46, and 75 each coordinate [2Fe-2S] cluster.

It depends on [2Fe-2S] cluster as a cofactor.

This is an uncharacterized protein from Buchnera aphidicola subsp. Acyrthosiphon pisum (strain APS) (Acyrthosiphon pisum symbiotic bacterium).